We begin with the raw amino-acid sequence, 245 residues long: MACTNDGPNKYPEIVSVKHLFQHSGSKHEFSAGKRFSKSIGKIFKRNSALKTSRTETANHKMELKKREGVTLLPPVPESLLHKLNSWLETFSSTKNMKIEENKIVINEKEIRDSVSYYPDKNGGSAVFCYLPDLVLYYKPPIKVTGKQCPIKRSPWESMEIQYQKFMYPLERLERQFEEVPFRPWYFAMRLKELYRCCERSFTNAANRGKARLLRGKQRTKKSYHKTVNLVSAKISTHSNAPSPG.

Involved in spore and ascus formation. Required for the efficient assembly of the precursors of the prospore membrane to a continuous prospore membrane. The chain is Spore membrane assembly protein 1 (SMA1) from Saccharomyces cerevisiae (strain ATCC 204508 / S288c) (Baker's yeast).